A 340-amino-acid chain; its full sequence is GTP-binding protein REM 2 (340 aa).

Over residues 1–13 (MHTDLDTDMDMDT) the composition is skewed to acidic residues. Positions 1–107 (MHTDLDTDMD…SDSLGSGEAA (107 aa)) are disordered. S27 carries the phosphoserine modification. Positions 40-53 (LLKKSEKLLAELDR) are enriched in basic and acidic residues. A compositionally biased stretch (low complexity) spans 93 to 104 (SSSGSSDSLGSG). Residues 121–128 (GESGVGKS), 229–232 (NKSD), and 260–261 (AA) each bind GTP. Residues 283 to 308 (RNHAGGQRPDPGSPEGPAPPARRESL) are disordered. Positions 293 to 302 (PGSPEGPAPP) are enriched in pro residues. The residue at position 295 (S295) is a Phosphoserine.

The protein belongs to the small GTPase superfamily. RGK family.

It localises to the cell membrane. Binds GTP saturably and exhibits a low intrinsic rate of GTP hydrolysis. The polypeptide is GTP-binding protein REM 2 (REM2) (Homo sapiens (Human)).